The primary structure comprises 210 residues: Na(+)-translocating NADH-quinone reductase subunit D (210 aa).

The next 5 helical transmembrane spans lie at 42-62, 72-92, 103-123, 131-151, and 178-198; these read FVMTLAVTFVTALSNFSVSLI, IIVQMAIIASLVIVVDQVLKA, VFVGLIITNCIVMGRAEAFAM, LIDGIGNGLGYGFVLITVGFF, and NGLMLLAPSAFFLIGFLIWVI.

It belongs to the NqrDE/RnfAE family. As to quaternary structure, composed of six subunits; NqrA, NqrB, NqrC, NqrD, NqrE and NqrF.

The protein resides in the cell inner membrane. The enzyme catalyses a ubiquinone + n Na(+)(in) + NADH + H(+) = a ubiquinol + n Na(+)(out) + NAD(+). NQR complex catalyzes the reduction of ubiquinone-1 to ubiquinol by two successive reactions, coupled with the transport of Na(+) ions from the cytoplasm to the periplasm. NqrA to NqrE are probably involved in the second step, the conversion of ubisemiquinone to ubiquinol. This chain is Na(+)-translocating NADH-quinone reductase subunit D, found in Vibrio campbellii (strain ATCC BAA-1116).